We begin with the raw amino-acid sequence, 209 residues long: Imidazoleglycerol-phosphate dehydratase (209 aa).

Residues 1–23 (MQLSDRPLTAPGTAPRQATVSRR) are disordered.

The protein belongs to the imidazoleglycerol-phosphate dehydratase family.

The protein resides in the cytoplasm. The catalysed reaction is D-erythro-1-(imidazol-4-yl)glycerol 3-phosphate = 3-(imidazol-4-yl)-2-oxopropyl phosphate + H2O. Its pathway is amino-acid biosynthesis; L-histidine biosynthesis; L-histidine from 5-phospho-alpha-D-ribose 1-diphosphate: step 6/9. This Synechococcus elongatus (strain ATCC 33912 / PCC 7942 / FACHB-805) (Anacystis nidulans R2) protein is Imidazoleglycerol-phosphate dehydratase.